We begin with the raw amino-acid sequence, 395 residues long: GPI-anchor transamidase (395 aa).

The N-terminal stretch at 1-27 (MVDTCFLSRGLTTLAGLLLLPFGSLAA) is a signal peptide. The Lumenal portion of the chain corresponds to 28 to 368 (SQIEDQAEQF…PKLKDWHPPG (341 aa)). Ca(2+)-binding residues include aspartate 79, isoleucine 82, glutamate 118, and aspartate 120. The active-site Proton donor is histidine 164. Cysteine 206 serves as the catalytic Nucleophile; acyl-thioester intermediate. Residues cysteine 206, serine 232, and serine 234 each coordinate a protein. The tract at residues 231-236 (DSLSHQ) is autoinhibitory loop. A disulfide bond links cysteine 275 and cysteine 280. A helical transmembrane segment spans residues 369 to 385 (GFILGLWALIIMVFFKT). The Cytoplasmic portion of the chain corresponds to 386-395 (YGIKHMKFIF).

It belongs to the peptidase C13 family. In terms of assembly, heteropentamer. Part of the GPI-anchor transamidase complex, consisting of PIGK, PIGT, PIGS, PIGU and GAA1. Interacts with GPAA1. Interacts with PIGT; this interaction, via a disulfide link, stabilizes the expression of GAA1 and PIGK and links them to PIGS. Post-translationally, the disulfide bond between PIGK/GPI8 and PIGT is important for normal enzyme activity.

The protein resides in the endoplasmic reticulum membrane. It functions in the pathway glycolipid biosynthesis; glycosylphosphatidylinositol-anchor biosynthesis. With respect to regulation, in the absence of proproteins substrates, exists in an inactive state with a disrupted catalytic site by an autoinhibitory loop. The binding of proprotein substrates, particularly the CSP region, to GPI-T triggers concerted conformational changes that alleviate the inhibition by the autoinhibitory loop. Meanwhile, proprotein residues near the omega- site induce the formation of a catalytic cleft for catalysis, following which the products are released and GPI-T reverts to the inactive state. Its function is as follows. Catalytic subunit of the glycosylphosphatidylinositol-anchor (GPI-anchor) transamidase (GPI-T) complex that catalyzes the formation of the linkage between a proprotein and a GPI-anchor and participates in GPI anchored protein biosynthesis. Recognizes diverse proproteins at a C-terminal signal peptide (CSP) region that lacks consensus sequence and replaces it with a GPI-anchor via a transamidation reaction. Transamidation catalysis reaction follows a two-phase mechanism. In the acyl-enzyme phase, the carbonyl group of the proproteins's omega-site undergoes a nucleophilic attack forming an enzyme-substrate thioester bond. Followed by a general acid catalysis that allows CSP releasing, regenerating the carbonyl, and forming the acyl-enzyme intermediate. In the GPI-anchor attachment phase, the amino group of the GPI-anchor's ethanolamine phosphate, the one on third mannose (EtNP3), mediates a nucleophilic attack on the carbonyl of the acyl-enzyme intermediate, replacing the CSP, allowing GPI-anchor attachment to the omega-residue, therefore forming the product and freeing the enzyme. The protein is GPI-anchor transamidase of Bos taurus (Bovine).